The following is a 204-amino-acid chain: Redox-sensing transcriptional repressor Rex 2 (204 aa).

Positions 17 to 53 (MYRKVLEATKKPYISSDEIARFLEINPDLVRKDFSYL) form a DNA-binding region, H-T-H motif.

It belongs to the transcriptional regulatory Rex family. In terms of assembly, homodimer.

The protein resides in the cytoplasm. In terms of biological role, modulates transcription in response to changes in cellular NADH/NAD(+) redox state. The polypeptide is Redox-sensing transcriptional repressor Rex 2 (rex2) (Thermotoga maritima (strain ATCC 43589 / DSM 3109 / JCM 10099 / NBRC 100826 / MSB8)).